A 541-amino-acid chain; its full sequence is MGGSAVQVINASEEHTFVLNEDALSEVLMRDEVKDRFVCVVSVAGAFRKGKSFLLDFFLRYMYSKYVHHDATDWLGGESDPLEGFSWRGGSERDTTGILMWSDIFLHDYPNGDKIAIILLDTQGAFDSQSTVRDCATVFALSTMLSSVQIYNLSQNIQEDDLQHLQLFTEYGRLALADTGKKPFQRLQFLVRDWSFPYEAEYGALGGDKILKRRLEVSDKQHPELQSLRRHISSCFTEVACFLMPHPGLNVATNPKFDGRLQDITPEFKSSLRSLVPMLLAPDNLVYKEISGQRVRARDLIQYFQSYMNIYKGNELPEPKSMLVATAEANHLTAVAAAKELYGQLMEEVCGGTRPYLSTAHLQTEHLRVKDKALFQFAAKRKMGGEEFTEKFRKQLEDDLEEVFTNYQAHNESKNIFKAARTPAVYFACAVIMYILSGIFGLVGLYTFANFCNLVMGVALLTLALWAYIRYSGELSDFGGKLDDFATLLWEKFMRPIYHGCMEKGIHHVATHATEMAVGGGAASYRSQTSVNASNGKVKRS.

Residues 1–424 (MGGSAVQVIN…NIFKAARTPA (424 aa)) lie on the Cytoplasmic side of the membrane. The GB1/RHD3-type G domain maps to 35–284 (DRFVCVVSVA…LVPMLLAPDN (250 aa)). The GDP site is built by arginine 48, lysine 49, glycine 50, lysine 51, and serine 52. Residues arginine 48, lysine 49, glycine 50, lysine 51, serine 52, and phenylalanine 53 each coordinate GTP. Serine 52 is a binding site for Mg(2+). Residue aspartate 121 participates in Mg(2+) binding. Residues arginine 192, aspartate 193, and valine 251 each contribute to the GDP site. Arginine 192, aspartate 193, and valine 251 together coordinate GTP. A 3HB (three-helix bundle) domain region spans residues 322–413 (MLVATAEANH…FTNYQAHNES (92 aa)). The linker stretch occupies residues 414–422 (KNIFKAART). Residues 425-445 (VYFACAVIMYILSGIFGLVGL) traverse the membrane as a helical segment. Over 446 to 448 (YTF) the chain is Lumenal. A helical transmembrane segment spans residues 449 to 469 (ANFCNLVMGVALLTLALWAYI). At 470–541 (RYSGELSDFG…NASNGKVKRS (72 aa)) the chain is on the cytoplasmic side. Threonine 514 is subject to Phosphothreonine.

The protein belongs to the TRAFAC class dynamin-like GTPase superfamily. GB1/RHD3 GTPase family. GB1 subfamily. In terms of assembly, monomeric and homodimeric. The homodimer, transiently formed by two molecules on opposing membranes, is the active form mediating ER membrane fusion. Interacts with spas; interaction may regulate microtubule dynamics. In terms of tissue distribution, ubiquitously expressed.

Its subcellular location is the endoplasmic reticulum membrane. The protein resides in the golgi apparatus membrane. It catalyses the reaction GTP + H2O = GDP + phosphate + H(+). Functionally, membrane-anchored GTPase that mediates the GTP-dependent fusion of endoplasmic reticulum (ER) membranes, maintaining the continuous ER network. It facilitates the formation of three-way junctions where ER tubules intersect. Two atlastin-1 on neighboring ER tubules bind GTP and form loose homodimers through the GB1/RHD3-type G domains and 3HB regions. Upon GTP hydrolysis, the 3HB regions tighten, pulling the membranes together to drive their fusion. After fusion, the homodimer disassembles upon release of inorganic phosphate (Pi). Subsequently, GDP dissociates, resetting the monomers to a conformation ready for a new fusion cycle. May also regulate more or less directly Golgi biogenesis. May also regulate microtubule polymerization and Golgi biogenesis. Required for dopaminergic neurons survival and the growth of muscles and synapses at neuromuscular junctions. The chain is Atlastin (atl) from Drosophila melanogaster (Fruit fly).